We begin with the raw amino-acid sequence, 477 residues long: Glycogen synthase (477 aa).

Lys-15 contributes to the ADP-alpha-D-glucose binding site.

It belongs to the glycosyltransferase 1 family. Bacterial/plant glycogen synthase subfamily.

The catalysed reaction is [(1-&gt;4)-alpha-D-glucosyl](n) + ADP-alpha-D-glucose = [(1-&gt;4)-alpha-D-glucosyl](n+1) + ADP + H(+). Its pathway is glycan biosynthesis; glycogen biosynthesis. Synthesizes alpha-1,4-glucan chains using ADP-glucose. The sequence is that of Glycogen synthase from Salmonella choleraesuis (strain SC-B67).